The primary structure comprises 471 residues: E3 ubiquitin-protein ligase TRIM38 (471 aa).

An RING-type zinc finger spans residues 16–62 (CSICKAMMSHPVSINCGHSYCKSCIQSYYCNVSPKTGWKMLGCPLCS). Residues 90 to 131 (DQDMVCEEHEEKFNRFCEDDGQLLCWRCYWEDRHKGHTLAHV) form a B box-type zinc finger. Residues C95, H98, C117, and H123 each coordinate Zn(2+). The B30.2/SPRY domain occupies 276–471 (CNVSELYFDV…PLFLPAINNQ (196 aa)).

As to quaternary structure, interacts (via B30.2/SPRY domain) with TAB2 and TAB3.

The protein localises to the cytoplasm. The catalysed reaction is S-ubiquitinyl-[E2 ubiquitin-conjugating enzyme]-L-cysteine + [acceptor protein]-L-lysine = [E2 ubiquitin-conjugating enzyme]-L-cysteine + N(6)-ubiquitinyl-[acceptor protein]-L-lysine.. The protein operates within protein modification; protein ubiquitination. Its pathway is protein modification; protein sumoylation. E3 ubiquitin-protein and E3 SUMO-protein ligase that acts as a regulator of innate immunity. Acts as a negative regulator of type I interferon IFN-beta production by catalyzing 'Lys-48'-linked polyubiquitination of AZI2/NAP1, leading to its degradation. Mediates 'Lys-48'-linked polyubiquitination and proteasomal degradation of the critical TLR adapter TICAM1, inhibiting TLR3-mediated type I interferon signaling. Acts as a positive regulator of the cGAS-STING pathway by acting as a E3 SUMO-protein ligase: mediates sumoylation of CGAS and STING, preventing their degradation and thereby activating the innate immune response to DNA virus. Also acts as a negative regulator of NF-kappa-B signaling independently of its E3 protein ligase activity by promoting lysosome-dependent degradation of TAB2 and TAB3 adapters. The chain is E3 ubiquitin-protein ligase TRIM38 from Mus musculus (Mouse).